The chain runs to 270 residues: MARVPEPTSEVMSYGYSDNENDLFFEADGPGKMKCCFQDLNNSYLEEEGIQLQISHQLHNKSLSHFVSVIVALEKLKKISVPCSLPLQGDDLMNVFHCIFEEEPIILEKCDDNAFVHDAPPRSLDCKFQDINQKSLVLYNSYELRALHLNGTSVNQQAVFRMTFVQEDEDITKIPVALCIKEKNLYLSCVMKDGKPTLQLEMLDPKVYPKKRMEKRFVFNKTEIKKKVEFESSQFPNWYISTSQAEAMPVFLGNNRGGHDITDFTMELSS.

Residues 1–118 (MARVPEPTSE…KCDDNAFVHD (118 aa)) constitute a propeptide that is removed on maturation.

It belongs to the IL-1 family. Monomer. In its precursor form, weakly interacts with full-length MEFV; the mature cytokine does not interact at all. Interacts with integrins ITGAV:ITGBV and ITGA5:ITGB1; integrin-binding is required for IL1B signaling. Interacts with cargo receptor TMED10; the interaction is direct and is required for the secretion of IL1B mature form. Interacts with HSP90AB1; the interaction facilitates cargo translocation into the ERGIC. Interacts with HSP90B1; the interaction facilitates cargo translocation into the ERGIC.

The protein resides in the cytoplasm. It localises to the cytosol. Its subcellular location is the secreted. It is found in the lysosome. The protein localises to the extracellular exosome. Potent pro-inflammatory cytokine. Initially discovered as the major endogenous pyrogen, induces prostaglandin synthesis, neutrophil influx and activation, T-cell activation and cytokine production, B-cell activation and antibody production, and fibroblast proliferation and collagen production. Promotes Th17 differentiation of T-cells. Synergizes with IL12/interleukin-12 to induce IFNG synthesis from T-helper 1 (Th1) cells. Plays a role in angiogenesis by inducing VEGF production synergistically with TNF and IL6. Involved in transduction of inflammation downstream of pyroptosis: its mature form is specifically released in the extracellular milieu by passing through the gasdermin-D (GSDMD) pore. In Mustela putorius furo (European domestic ferret), this protein is Interleukin-1 beta (IL1B).